The following is an 877-amino-acid chain: Leucine--tRNA ligase (877 aa).

The 'HIGH' region signature appears at 43–53; it reads PYPSGRIHMGH. Positions 628–632 match the 'KMSKS' region motif; sequence KMSKS. An ATP-binding site is contributed by K631.

Belongs to the class-I aminoacyl-tRNA synthetase family.

Its subcellular location is the cytoplasm. The catalysed reaction is tRNA(Leu) + L-leucine + ATP = L-leucyl-tRNA(Leu) + AMP + diphosphate. This Brucella abortus biovar 1 (strain 9-941) protein is Leucine--tRNA ligase.